Here is a 100-residue protein sequence, read N- to C-terminus: Small ribosomal subunit protein uS14 (100 aa).

The protein belongs to the universal ribosomal protein uS14 family. Part of the 30S ribosomal subunit. Contacts proteins S3 and S10.

Binds 16S rRNA, required for the assembly of 30S particles and may also be responsible for determining the conformation of the 16S rRNA at the A site. This is Small ribosomal subunit protein uS14 from Prochlorococcus marinus (strain MIT 9313).